We begin with the raw amino-acid sequence, 868 residues long: MKRIFYTLGLLLLCLPMLQAGPVTRSKAEQTAKNFFAKRQPTLSSSTASLRMDFVYKAAEREEALFFVFNRGEKDGFLLVAADDRFPEVIGYAFKGHFDAARMPDNLRGWLKGYEREMLAVMDGKAEPIDPIREAKPTRDLPSSIAPILETGEHASDPILWDQGYPFNTLHPLLPSGQQAYTGCVATAMGQIMRHYKWPEKASGEYDYYDDMTGTHTHYSGTFGETYNWSKMPGNISVGISPEEVKALSTFMRDVSFSVNMQFADFGSGTFSIFVERALRETFHYKKSLRYIHRSLLPGKEWKDMIRKELAENRPVYYAGADGSMGHAFVCDGYEPDGTFHFNWGWGGMSNGNFYLNLLNPGSLGTGAGDGGYSTDQEVVIGIEPASNEAPGIVPDPTITLYGLQHNMSDEALDLSVKIKNYSTYAGDVKLAYRLTLPNGTETTNPAVTVPIVWEDIIGESTGNITIPCSQFAEGKNTISILYRTDGMADWKELKHILMGLVNKIEVTMPAGDVAYSVADARIVLKDGSLSHNLKAYSDCKLSATVYNPGTEEFRSRVTFALRNTEGRLYFLGRHLVELHPGDEDGEKVSLTITGLKARAGQYMLVCTGDMELLMEDASWIELASIEVAEHTSTHSSLLVASNPQIDLLTVHRANPETLPTFSITNEGGATFSGKIEIVAIKAFSETFFQAKEEHMSLAQGETKVLSPELTANSSLYTNAELFPDGIYYIVIREQGFWDPIDLFGDYYYRIRLITDLSSSXIAGKDVSTIVLYPNPAHDYVHVAIPPTYAGSTLRLFDIQGRMQLSTKIRICRYASRRRTSSEGHLYRCGRRHGREALYSLIQSVNSKTDKGNAGWEIPSGHCPCTVC.

A signal peptide spans 1 to 27 (MKRIFYTLGLLLLCLPMLQAGPVTRSK). Active-site residues include cysteine 184 and histidine 327.

Belongs to the peptidase C10 family.

Its function is as follows. Appears to be specific for arginine-containing peptide bonds. Possesses hemagglutinin activity. This is Thiol protease/hemagglutinin PrtT (prtT) from Porphyromonas gingivalis (Bacteroides gingivalis).